The primary structure comprises 464 residues: Sensor histidine kinase Hik34 (464 aa).

One can recognise a Histidine kinase domain in the interval 235–449 (ALTHEVRTPL…ILTIYLKCEQ (215 aa)). Position 238 is a phosphohistidine; by autocatalysis (H238).

In terms of processing, when expressed in E.coli autophosphorylates at 18 to 30 degrees Celsius; less phosphorylation occurs at 36 and none occurs at 42 or 48 degrees Celsius.

The catalysed reaction is ATP + protein L-histidine = ADP + protein N-phospho-L-histidine.. In terms of biological role, member of a two-component system Hik34/Rre1, controlling expression of at least 20 genes in response to hyperosmotic stress (0.5 M sorbitol) or salt (0.5 M NaCl). Represses expression of heat shock genes under normal growth conditions. Required for survival of long-term heat shock exposure. The sequence is that of Sensor histidine kinase Hik34 from Synechocystis sp. (strain ATCC 27184 / PCC 6803 / Kazusa).